Reading from the N-terminus, the 1113-residue chain is Histone deacetylase 5 (1113 aa).

A disordered region spans residues 1-22; sequence MNSPNESDGMSGREPSLGILPR. Lys-35 participates in a covalent cross-link: Glycyl lysine isopeptide (Lys-Gly) (interchain with G-Cter in SUMO2). Disordered regions lie at residues 39–63 and 187–272; these read PGAM…RGAL and KEPT…SSPL. The span at 238 to 249 shows a compositional bias: basic and acidic residues; the sequence is DSRDDFPLRKTA. Ser-250 is modified (phosphoserine; by AMPK, CaMK1, SIK1 and PKD/PRKD1). Over residues 263-272 the composition is skewed to basic and acidic residues; sequence KVAERRSSPL. Thr-283 is modified (phosphothreonine; by PKC). The tract at residues 472 to 494 is disordered; that stretch reads RTVGKLPRHRPLSRTQSSPLPQS. The span at 484–494 shows a compositional bias: low complexity; sequence SRTQSSPLPQS. Phosphoserine; by AMPK, CaMK1, SIK1 and PKD/PRKD1 is present on Ser-488. Lys-523 bears the N6-acetyllysine mark. The segment at 526–611 is disordered; it reads TKTGELSRQP…PDEGPDLEES (86 aa). Over residues 571–610 the composition is skewed to acidic residues; it reads STQEDLEEEEEEEEEEEEDCIQVKDEDGESGPDEGPDLEE. Phosphoserine occurs at positions 600 and 650. The interval 675–1019 is histone deacetylase; it reads GVVYDTFMLK…VSALLSVELQ (345 aa). Zn(2+)-binding residues include Cys-687, Cys-689, His-695, and Cys-772. Residue His-824 is part of the active site. The Nuclear export signal motif lies at 1072 to 1113; sequence EEAETVSAMALLSVGAEQAQAVATQEHSPRPAEEPMEQEPAL. The segment at 1088–1113 is disordered; sequence EQAQAVATQEHSPRPAEEPMEQEPAL. Residue Ser-1099 is modified to Phosphoserine.

It belongs to the histone deacetylase family. HD type 2 subfamily. In terms of assembly, interacts with AHRR, BAHD1, BCOR, HDAC7, HDAC9, CTBP1, MEF2C, NCOR2, NRIP1, PHB2 and a 14-3-3 chaperone protein. Interacts with BCL6, DDIT3/CHOP, GRK5, KDM5B and MYOCD. Interacts with EP300 in the presence of TFAP2C. Interacts with ANKRA2. Interacts with CUL7 (as part of the 3M complex); negatively regulated by ANKRA2. Interacts with ZBTB7B; the interaction allows the recruitment of HDAC4 on CD8 loci for deacetylation and possible inhibition of CD8 genes expression. Interacts with RARA. In terms of processing, phosphorylated by AMPK, CaMK1, SIK1 and PRKD1 at Ser-250 and Ser-488. The phosphorylation is required for the export to the cytoplasm and inhibition. Phosphorylated by the PKC kinases PKN1 and PKN2, impairing nuclear import. Phosphorylated by GRK5, leading to nuclear export of HDAC5 and allowing MEF2-mediated transcription. Post-translationally, ubiquitinated. Polyubiquitination however does not lead to its degradation.

It localises to the nucleus. Its subcellular location is the cytoplasm. It carries out the reaction N(6)-acetyl-L-lysyl-[histone] + H2O = L-lysyl-[histone] + acetate. Its function is as follows. Responsible for the deacetylation of lysine residues on the N-terminal part of the core histones (H2A, H2B, H3 and H4). Histone deacetylation gives a tag for epigenetic repression and plays an important role in transcriptional regulation, cell cycle progression and developmental events. Histone deacetylases act via the formation of large multiprotein complexes. Involved in muscle maturation by repressing transcription of myocyte enhancer MEF2C. During muscle differentiation, it shuttles into the cytoplasm, allowing the expression of myocyte enhancer factors. Serves as a corepressor of RARA and causes its deacetylation. In association with RARA, plays a role in the repression of microRNA-10a and thereby in the inflammatory response. In Mus musculus (Mouse), this protein is Histone deacetylase 5 (Hdac5).